A 476-amino-acid chain; its full sequence is MKVTLPAFEKARVLVLGDVMLDRYWVGPTGRISPEAPVPVVKINQIEDRPGGAANVALNIATLGGQVQLAGLVGDDETAKALTLGVQTLGVEPQWLVVNDKPTITKLRVLSRNQQLIRLDFEEEFDSASSQALFKQSEAMLDNVDVLVLSDYAKGAIADPRAFIAKARAKGVTVLVDPKGSDFARYHGASLITPNMSEFEAVVGPVKDEADLIEKARQLIKTHEFSAMLVTRSEKGMTLITADEPELHIPTVAREVYDVTGAGDTVISALATSLGAGSTLAQACAIANTAAGVVVGKLGTSTVSRIELIGALASHQGESGFGVVSEDQLAYAMEQARLRGERVVMTNGCFDILHAGHVSYLKQAKALGDRLIVAVNSDASVKRLKGDGRPVNQVDRRMAVLAGLAAVDWVVPFCEDTPERIITRLLPDALVKGGDYKVEDIAGGAQVIAAGGKVEVLGFEDGVSTTSIIQNIMARQ.

A ribokinase region spans residues 1–319 (MKVTLPAFEK…GALASHQGES (319 aa)). 195–198 (NMSE) contributes to the ATP binding site. The active site involves Asp-264. The segment at 345–476 (MTNGCFDILH…SIIQNIMARQ (132 aa)) is cytidylyltransferase.

In the N-terminal section; belongs to the carbohydrate kinase PfkB family. The protein in the C-terminal section; belongs to the cytidylyltransferase family. In terms of assembly, homodimer.

The catalysed reaction is D-glycero-beta-D-manno-heptose 7-phosphate + ATP = D-glycero-beta-D-manno-heptose 1,7-bisphosphate + ADP + H(+). The enzyme catalyses D-glycero-beta-D-manno-heptose 1-phosphate + ATP + H(+) = ADP-D-glycero-beta-D-manno-heptose + diphosphate. It participates in nucleotide-sugar biosynthesis; ADP-L-glycero-beta-D-manno-heptose biosynthesis; ADP-L-glycero-beta-D-manno-heptose from D-glycero-beta-D-manno-heptose 7-phosphate: step 1/4. The protein operates within nucleotide-sugar biosynthesis; ADP-L-glycero-beta-D-manno-heptose biosynthesis; ADP-L-glycero-beta-D-manno-heptose from D-glycero-beta-D-manno-heptose 7-phosphate: step 3/4. Functionally, catalyzes the phosphorylation of D-glycero-D-manno-heptose 7-phosphate at the C-1 position to selectively form D-glycero-beta-D-manno-heptose-1,7-bisphosphate. Catalyzes the ADP transfer from ATP to D-glycero-beta-D-manno-heptose 1-phosphate, yielding ADP-D-glycero-beta-D-manno-heptose. The sequence is that of Bifunctional protein HldE from Shewanella denitrificans (strain OS217 / ATCC BAA-1090 / DSM 15013).